Reading from the N-terminus, the 2974-residue chain is Mediator of RNA polymerase II transcription subunit 13 (2974 aa).

4 stretches are compositionally biased toward basic and acidic residues: residues 284 to 299, 340 to 367, 374 to 390, and 624 to 633; these read EKEPENVTEERQKTPE, MFEPDLRQDKPKEETAAEKEKRMAAREV, RREERRREMEKQRRADD, and SREKRKEYQP. Disordered stretches follow at residues 284 to 309, 340 to 394, 624 to 654, 677 to 749, 764 to 801, 1032 to 1063, 1099 to 1134, 1140 to 1159, 1281 to 1342, 1416 to 1486, 2052 to 2078, and 2247 to 2309; these read EKEPENVTEERQKTPEAEPPAPPQTT, MFEP…NLED, SREKRKEYQPYHRKRPAKSVKEKKKKAKRKV, FNAW…FADI, LYNPAGGDIEEGDETSNESPDEKTPEGSPNGSPRPKEE, PHGSFDHDSEPEFDEQRTGLGEGTSDQYQDGE, GMLSPPASNEMPKGGPLSVGPASIESQGLNQIYPTP, LQADASQAHSPSIGGKFRST, TLAR…TPTY, QGGL…DATA, ELKKADEHPAPPSTQSENSEGNAATPA, and QDEA…PAGM. Residues 351-396 are a coiled coil; it reads KEETAAEKEKRMAAREVRRLRRQRREERRREMEKQRRADDNLEDYD. Basic residues-rich tracts occupy residues 634–654 and 677–688; these read YHRKRPAKSVKEKKKKAKRKV and FNAWKQKKKGPP. Basic and acidic residues predominate over residues 689–717; sequence PKKDLAKKEAAADKDKDKDKEKDKEKDKD. Residues 1035–1048 are compositionally biased toward basic and acidic residues; sequence SFDHDSEPEFDEQR. Composition is skewed to polar residues over residues 1122–1134 and 1140–1149; these read IESQGLNQIYPTP and LQADASQAHS. Pro residues-rich tracts occupy residues 1284 to 1299 and 1326 to 1340; these read RPPPGATSPLPPPTPM and PAYPPTPGPYPPTTP. Residues 1443-1464 show a composition bias toward polar residues; it reads IRNTDAPNDPTVSKLQSAVSRN. The segment covering 1473–1486 has biased composition (low complexity); the sequence is AATSIPTATDDATA. Over residues 2064 to 2073 the composition is skewed to polar residues; sequence STQSENSEGN. Positions 2220–2301 form a coiled coil; the sequence is AVEGRLKRQK…EQYPAEESQA (82 aa). Composition is skewed to basic and acidic residues over residues 2247–2258 and 2281–2292; these read QDEADKREKMDE and EEKKRNKQKENE. Positions 2347–2974 are mediates transcriptional repression; it reads WKQRDTRVQN…LYHSVARLLV (628 aa).

This sequence belongs to the Mediator complex subunit 13 family. As to quaternary structure, component of the Mediator complex.

It is found in the nucleus. Component of the Mediator complex, a coactivator involved in regulated gene transcription of nearly all RNA polymerase II-dependent genes. Mediator functions as a bridge to convey information from gene-specific regulatory proteins to the basal RNA polymerase II transcription machinery. Mediator is recruited to promoters by direct interactions with regulatory proteins and serves as a scaffold for the assembly of a functional preinitiation complex with RNA polymerase II and the general transcription factors. In Caenorhabditis briggsae, this protein is Mediator of RNA polymerase II transcription subunit 13 (let-19).